A 500-amino-acid polypeptide reads, in one-letter code: Ephrin type-B receptor 3 (500 aa).

Positions 1-64 (PLLVLDLIIQ…NPVDFSTSLY (64 aa)) constitute a Fibronectin type-III domain. The Extracellular segment spans residues 1-113 (PLLVLDLIIQ…ERSVQDLLPL (113 aa)). The segment at 76–103 (HLRRREELTTTTTGLKSREERFQKSDDP) is disordered. Basic and acidic residues predominate over residues 91–103 (KSREERFQKSDDP). Residues 114-134 (IVGSASAGFVVILAMIVIAVV) traverse the membrane as a helical segment. The Cytoplasmic portion of the chain corresponds to 135-500 (CLRRQRTGSE…QMSQTLPIRV (366 aa)). Y168 is modified (phosphotyrosine; by autocatalysis). The Protein kinase domain maps to 187 to 450 (VKIEEVIGAG…QIVSTLDKFL (264 aa)). ATP-binding positions include 193-201 (IGAGEFGEV) and K219. D312 (proton acceptor) is an active-site residue. Residues 421-500 (LHQLMLECWV…QMSQTLPIRV (80 aa)) enclose the SAM domain. Residues 498–500 (IRV) carry the PDZ-binding motif.

Belongs to the protein kinase superfamily. Tyr protein kinase family. Ephrin receptor subfamily. Heterotetramer upon binding of the ligand. The heterotetramer is composed of an ephrin dimer and a receptor dimer. Oligomerization is probably required to induce biological responses. In terms of processing, phosphorylated. Autophosphorylates upon ligand-binding. Autophosphorylation on Tyr-168 is required for interaction with SH2 domain-containing proteins. Widely expressed in the developing nervous system.

It is found in the cell membrane. Its subcellular location is the cell projection. The protein localises to the dendrite. The catalysed reaction is L-tyrosyl-[protein] + ATP = O-phospho-L-tyrosyl-[protein] + ADP + H(+). Functionally, receptor tyrosine kinase which binds promiscuously transmembrane ephrin-B family ligands residing on adjacent cells, leading to contact-dependent bidirectional signaling into neighboring cells. The signaling pathway downstream of the receptor is referred to as forward signaling while the signaling pathway downstream of the ephrin ligand is referred to as reverse signaling. Generally has an overlapping and redundant function with EPHB2. Like EPHB2, functions in axon guidance during development. In addition to its role in axon guidance also plays an important redundant role with other ephrin-B receptors in development and maturation of dendritic spines and the formation of excitatory synapses. May control other aspects of development through regulation of cell migration and positioning. May play a role in early pattern formation within the developing nervous system. This is Ephrin type-B receptor 3 (ephb3) from Danio rerio (Zebrafish).